The sequence spans 352 residues: Tropomodulin-3 (352 aa).

Phosphoserine is present on Ser-25.

This sequence belongs to the tropomodulin family. Binds to the N-terminus of tropomyosin and to actin. Interacts with FLII. As to expression, ubiquitous.

The protein localises to the cytoplasm. The protein resides in the cytoskeleton. Functionally, blocks the elongation and depolymerization of the actin filaments at the pointed end. The Tmod/TM complex contributes to the formation of the short actin protofilament, which in turn defines the geometry of the membrane skeleton. The protein is Tropomodulin-3 (Tmod3) of Mus musculus (Mouse).